Consider the following 269-residue polypeptide: MSRLEQRFAELKAEGRSALVTFVTAGDPGYDASLQILKGLPAAGADVIELGMPFTDPMADGVAIQLATLRALEAGQTLAKTLQMVREFRVDNHTTPIVLMGYYNPIHRFGVEKFVAEAKQAGVDGLIIVDLPPEHDAELATPAQAAGIDFIRLTTPTTDDARLPRVLERSSGFVYYVSVAGVTGAGSATTEHVTEAIARLRRHTDLPISVGFGIRTPEQAANIARLADGVVVGSALVDKIAQATSADQAVNDVLSLCSALAEGVRGARR.

Active-site proton acceptor residues include Glu-49 and Asp-60.

Belongs to the TrpA family. As to quaternary structure, tetramer of two alpha and two beta chains.

It carries out the reaction (1S,2R)-1-C-(indol-3-yl)glycerol 3-phosphate + L-serine = D-glyceraldehyde 3-phosphate + L-tryptophan + H2O. The protein operates within amino-acid biosynthesis; L-tryptophan biosynthesis; L-tryptophan from chorismate: step 5/5. Its function is as follows. The alpha subunit is responsible for the aldol cleavage of indoleglycerol phosphate to indole and glyceraldehyde 3-phosphate. This is Tryptophan synthase alpha chain from Pseudomonas putida (Arthrobacter siderocapsulatus).